Consider the following 184-residue polypeptide: ATP synthase subunit b, chloroplastic (184 aa).

The chain crosses the membrane as a helical span at residues 27 to 49 (LATNPINLSVVLGVLIFFGKGVL).

Belongs to the ATPase B chain family. In terms of assembly, F-type ATPases have 2 components, F(1) - the catalytic core - and F(0) - the membrane proton channel. F(1) has five subunits: alpha(3), beta(3), gamma(1), delta(1), epsilon(1). F(0) has four main subunits: a(1), b(1), b'(1) and c(10-14). The alpha and beta chains form an alternating ring which encloses part of the gamma chain. F(1) is attached to F(0) by a central stalk formed by the gamma and epsilon chains, while a peripheral stalk is formed by the delta, b and b' chains.

The protein resides in the plastid. It is found in the chloroplast thylakoid membrane. In terms of biological role, f(1)F(0) ATP synthase produces ATP from ADP in the presence of a proton or sodium gradient. F-type ATPases consist of two structural domains, F(1) containing the extramembraneous catalytic core and F(0) containing the membrane proton channel, linked together by a central stalk and a peripheral stalk. During catalysis, ATP synthesis in the catalytic domain of F(1) is coupled via a rotary mechanism of the central stalk subunits to proton translocation. Component of the F(0) channel, it forms part of the peripheral stalk, linking F(1) to F(0). The sequence is that of ATP synthase subunit b, chloroplastic from Phalaenopsis aphrodite subsp. formosana (Moth orchid).